Reading from the N-terminus, the 448-residue chain is Vicilin Cor a 11.0101 (448 aa).

The span at Met-1–Glu-44 shows a compositional bias: basic and acidic residues. The interval Met-1 to Asp-66 is disordered. An N-linked (GlcNAc...) asparagine glycan is attached at Asn-47. Cupin type-1 domains lie at Glu-84–Glu-220 and Ile-263–Glu-418. Residue Asn-301 is glycosylated (N-linked (GlcNAc...) asparagine). Cu cation is bound by residues Cys-333, His-335, and His-362.

This sequence belongs to the 7S seed storage protein family. In terms of assembly, homotrimer. Homohexamer. N-glycosylated at Asn-301 mostly with xylosylated paucimannosidic-type N-glycan MMX (an N-linked glycan with beta-1,2-xylose residue in the structure) and also with MMXF (a complex N-linked glycan with alpha-1,3-fucose and beta-1,2-xylose residues in the structure). Post-translationally, a mixture of proteolytically processed and unprocessed subunits exist. As to expression, expressed in seed (at protein level). Expressed in seed.

Functionally, seed storage protein. Does not have superoxide dismutase (SOD) activity. The protein is Vicilin Cor a 11.0101 of Corylus avellana (European hazel).